The chain runs to 543 residues: Chaperonin GroEL (543 aa).

Residues 29-32 (TLGP), 86-90 (DGTTT), Gly-413, 476-478 (NAA), and Asp-492 contribute to the ATP site.

Belongs to the chaperonin (HSP60) family. As to quaternary structure, forms a cylinder of 14 subunits composed of two heptameric rings stacked back-to-back. Interacts with the co-chaperonin GroES.

It localises to the cytoplasm. It catalyses the reaction ATP + H2O + a folded polypeptide = ADP + phosphate + an unfolded polypeptide.. Functionally, together with its co-chaperonin GroES, plays an essential role in assisting protein folding. The GroEL-GroES system forms a nano-cage that allows encapsulation of the non-native substrate proteins and provides a physical environment optimized to promote and accelerate protein folding. This is Chaperonin GroEL from Streptococcus pyogenes serotype M49 (strain NZ131).